We begin with the raw amino-acid sequence, 287 residues long: Probable 18S rRNA (guanine-N(7))-methyltransferase (287 aa).

Residues 214–287 (GVEGEEYEQQ…FSGRKRGPKF (74 aa)) are disordered. Residues 217–228 (GEEYEQQEEEDS) show a composition bias toward acidic residues. A compositionally biased stretch (basic residues) spans 234-245 (SNRKRDRRRVTK). Positions 253–278 (KTKEWIMNKKDRQRKQGREIKNDSKF) are enriched in basic and acidic residues.

The protein belongs to the class I-like SAM-binding methyltransferase superfamily. BUD23/WBSCR22 family.

It is found in the nucleus. The protein resides in the nucleoplasm. Its subcellular location is the cytoplasm. It localises to the perinuclear region. It catalyses the reaction a guanosine in 18S rRNA + S-adenosyl-L-methionine = an N(7)-methylguanosine in 18S rRNA + S-adenosyl-L-homocysteine. Its function is as follows. S-adenosyl-L-methionine-dependent methyltransferase that specifically methylates the N(7) position of a guanine in 18S rRNA. Important for biogenesis end export of the 40S ribosomal subunit independent on its methyltransferase activity. Functionally, S-adenosyl-L-methionine-dependent methyltransferase that specifically methylates the N(7) position of a guanine in 18S rRNA. Requires the methyltransferase adapter protein TRM112 for full rRNA methyltransferase activity. Involved in the pre-rRNA processing steps leading to small-subunit rRNA production independently of its RNA-modifying catalytic activity. Important for biogenesis end export of the 40S ribosomal subunit independent on its methyltransferase activity. This is Probable 18S rRNA (guanine-N(7))-methyltransferase from Dictyostelium discoideum (Social amoeba).